Consider the following 814-residue polypeptide: Kinesin-like protein KIF6 (814 aa).

A Kinesin motor domain is found at 5–345; that stretch reads TIQIFARVKP…CRFAQRVALI (341 aa). 97–104 contributes to the ATP binding site; it reads GQTGSGKT. Coiled coils occupy residues 356 to 385, 456 to 494, and 588 to 683; these read NPRL…QRTE, LKEE…EALH, and EAKA…KEFE. A disordered region spans residues 752-788; that stretch reads LPSPCPSPHSQKQSSTSTPLEDSIPKRPVSSIPLTGD. Over residues 759–771 the composition is skewed to polar residues; it reads PHSQKQSSTSTPL.

The protein belongs to the TRAFAC class myosin-kinesin ATPase superfamily. Kinesin family.

The protein localises to the cytoplasm. It localises to the cytoskeleton. The sequence is that of Kinesin-like protein KIF6 (KIF6) from Homo sapiens (Human).